A 173-amino-acid polypeptide reads, in one-letter code: Pathogenesis-related protein 1C (173 aa).

The first 20 residues, M1–A20, serve as a signal peptide directing secretion.

Belongs to the thaumatin family.

The sequence is that of Pathogenesis-related protein 1C from Hordeum vulgare (Barley).